The primary structure comprises 288 residues: Glandicoline B O-methyltransferase roqN (288 aa).

S-adenosyl-L-methionine is bound by residues T57, D82, and 109 to 110 (DA).

Belongs to the class I-like SAM-binding methyltransferase superfamily.

It carries out the reaction glandicoline B + S-adenosyl-L-methionine = meleagrin + S-adenosyl-L-homocysteine + H(+). The protein operates within alkaloid biosynthesis. Functionally, glandicoline B O-methyltransferase; part of the gene cluster that mediates the biosynthesis of the mycotoxin meleagrin. The first stage is catalyzed by the dipeptide synthase roqA which condenses histidine and tryptophan to produce histidyltryptophanyldiketopiperazine (HTD). HTD is then converted to roquefortine C through two possible pathways. In the first pathway, prenyltransferase roqD transforms HTD to the intermediate roquefortine D, which is in turn converted to roquefortine C by the cytochrome P450 monooxygenase roqR. In the second pathway, HTD is first converted to the intermediate dehydrohistidyltryptophanyldi-ketopiperazine (DHTD) by roqR which is then prenylated by roqD to form roquefortine C. Roquefortine C can be further transformed to meleagrin via three more reactions including oxydation to glandicolin A by roqM, which is further reduced to glandicoline B by roqO. Finally, glandicoline B is converted to meleagrin by the glandicoline B O-methyltransferase roqN. More studies identified further branching and additional metabolites produced by the roquefortine/meleagrin cluster, including roquefortine F, roquefortine L, roquefortine M, roquefortine N and neoxaline. The protein is Glandicoline B O-methyltransferase roqN of Penicillium rubens (strain ATCC 28089 / DSM 1075 / NRRL 1951 / Wisconsin 54-1255) (Penicillium chrysogenum).